The sequence spans 716 residues: Epidermal growth factor receptor kinase substrate 8-like protein 2 (716 aa).

2 disordered regions span residues 1 to 25 (MSQS…DGVA) and 182 to 243 (PQTL…SQEE). One can recognise a PID domain in the interval 46–202 (MHETSQYHVQ…RQRQSILPPP (157 aa)). Positions 199-208 (LPPPQGPAPI) are enriched in pro residues. Residues 234 to 243 (GFRRRESQEE) are compositionally biased toward basic and acidic residues. Residue serine 240 is modified to Phosphoserine. Threonine 304 is modified (phosphothreonine). The interval 449 to 488 (VSPVSRQSIRNSQKHSPTSEPTPPGDALPPVSSPHTHRGY) is disordered. Phosphoserine is present on serine 450. Residues 452 to 467 (VSRQSIRNSQKHSPTS) are compositionally biased toward polar residues. At threonine 470 the chain carries Phosphothreonine. An SH3 domain is found at 493 to 552 (AMAKYVKILYDFTARNANELSVLKDEVLEVLEDGRQWWKLRSRSGQAGYVPCNILGEARP). Serine 571 carries the phosphoserine modification.

It belongs to the EPS8 family. In terms of assembly, interacts with ABI1. Part of a complex that contains SOS1, ABI1 and EPS8L2. Associates with F-actin.

It is found in the cytoplasm. The protein resides in the cell projection. Its subcellular location is the stereocilium. In terms of biological role, stimulates guanine exchange activity of SOS1. May play a role in membrane ruffling and remodeling of the actin cytoskeleton. In the cochlea, is required for stereocilia maintenance in adult hair cells. In Pongo abelii (Sumatran orangutan), this protein is Epidermal growth factor receptor kinase substrate 8-like protein 2 (EPS8L2).